The sequence spans 2079 residues: Non-reducing polyketide synthase Dhc5 (2079 aa).

Positions 9–246 (LLFGDVTDPW…DELNIHALQH (238 aa)) are N-terminal acylcarrier protein transacylase domain (SAT). A Ketosynthase family 3 (KS3) domain is found at 366–798 (NDGIAIVGMA…GGNACLLLED (433 aa)). Active-site for beta-ketoacyl synthase activity residues include C543, H678, and H717. Positions 895-1199 (VFVFTGQGSH…MTHSLQPKTS (305 aa)) are malonyl-CoA:ACP transacylase (MAT) domain. The active-site For acyl/malonyl transferase activity is the S986. The tract at residues 1268-1414 (EPLISTCAQY…DPTRSQVEWD (147 aa)) is N-terminal hotdog fold. In terms of domain architecture, PKS/mFAS DH spans 1268–1584 (EPLISTCAQY…YQELPRATWK (317 aa)). Residues 1304 to 1581 (MDGHKMQGIG…DIRYQELPRA (278 aa)) form a product template (PT) domain region. A C-terminal hotdog fold region spans residues 1435 to 1584 (RGHRMQPEVF…YQELPRATWK (150 aa)). The disordered stretch occupies residues 1613–1639 (RELQQPSSATVPAQETTIDEPEQQEGE). A compositionally biased stretch (polar residues) spans 1615 to 1628 (LQQPSSATVPAQET). The region spanning 1641 to 1718 (AAGARLFNAI…DLRKEFRANE (78 aa)) is the Carrier domain. S1678 carries the O-(pantetheine 4'-phosphoryl)serine modification. The tract at residues 1721–1784 (VENPRFSATP…EQKRPVKIDD (64 aa)) is disordered. Low complexity predominate over residues 1727–1757 (SATPSSAEASIPSSPSSLAHPMSDSASSLSP). The span at 1758–1784 (SDREEALPLERQSMTKREQKRPVKIDD) shows a compositional bias: basic and acidic residues. Residues 1812 to 2057 (ADGTGTIATY…LSVAGDHLDL (246 aa)) form a thioesterase (TE) domain region. H2064 functions as the For thioesterase activity in the catalytic mechanism.

The protein operates within mycotoxin biosynthesis. Functionally, highly reducing polyketide synthase; part of the gene cluster that mediates the biosynthesis of 10,11-dehydrocurvularin, a prevalent fungal phytotoxin with heat shock response and immune-modulatory activities. The highly reducing polyketide synthase Dhc3 is responsible for biosynthesis up to the tetraketide stage. The non-reducing polyketide synthase Dhc5 then conducts four additional chain extension cycles, producing the unreduced part of the nascent octaketide from C-1 to C-8 in 10,11-dehydrocurvularin. In Alternaria cinerariae, this protein is Non-reducing polyketide synthase Dhc5.